A 166-amino-acid polypeptide reads, in one-letter code: MFSLPLNCSPDHIRRGSCWGRPQDLKIAAPAWNSKCHPGAGAAMARQHARTLWYDRPRYVFMEFCVEDSTDVHVLIEDHRIVFSCKNADGVELYNEIEFYAKVNSKPVWLSVDFDNWRDWEGDEEMELAHVEHYAELLKKVSTKRPPPAMDDLDDDSDSADDATSN.

A CS domain is found at 46-154 (RQHARTLWYD…RPPPAMDDLD (109 aa)). Residues 142–166 (STKRPPPAMDDLDDDSDSADDATSN) are disordered. The span at 151 to 166 (DDLDDDSDSADDATSN) shows a compositional bias: acidic residues.

It belongs to the p23/wos2 family.

The chain is Putative protein PTGES3L from Homo sapiens (Human).